Consider the following 142-residue polypeptide: ATP synthase epsilon chain (142 aa).

This sequence belongs to the ATPase epsilon chain family. In terms of assembly, F-type ATPases have 2 components, CF(1) - the catalytic core - and CF(0) - the membrane proton channel. CF(1) has five subunits: alpha(3), beta(3), gamma(1), delta(1), epsilon(1). CF(0) has three main subunits: a, b and c.

Its subcellular location is the cell inner membrane. Produces ATP from ADP in the presence of a proton gradient across the membrane. This is ATP synthase epsilon chain from Koribacter versatilis (strain Ellin345).